The following is a 750-amino-acid chain: Cation-transporting P-type ATPase B (750 aa).

In terms of domain architecture, HMA spans 17 to 80; that stretch reads RRIQLDVAGM…VIEQAGYRAT (64 aa). The a metal cation site is built by Cys28 and Cys31. 6 helical membrane passes run 104 to 124, 129 to 149, 167 to 187, 200 to 220, 360 to 380, and 389 to 409; these read LIVAALLFVPLADLSTMFAIV, FPGWGYLLTALAAPIVTWAAW, ETLISAGILAATGWSLSTIFV, AILHSDSIYFEVAAGVTVFVL, IAAVFVPMVFVIAGLAGASWL, and AFSVVLGVLVIACPCTLGLAT. Asp445 (4-aspartylphosphate intermediate) is an active-site residue. A run of 6 helical transmembrane segments spans residues 471–491, 500–520, 547–567, 663–683, 693–713, and 715–735; these read VLALASAVEAASEHSVATAIV, VADFVAFAGCGVSGVVAEHHV, SRGETVVFVSVDGVACGAVAI, VAIGAADLILVRDSLGVVPVA, TIRINMIWAFGYNVAAIPIAS, and GLLNPLIAGAAMAFSSFFVVS.

This sequence belongs to the cation transport ATPase (P-type) (TC 3.A.3) family. Type IB subfamily.

Its subcellular location is the cell membrane. It catalyses the reaction ATP + H2O = ADP + phosphate + H(+). This Mycobacterium leprae (strain TN) protein is Cation-transporting P-type ATPase B (ctpB).